A 203-amino-acid chain; its full sequence is uncharacterized protein (203 aa).

4 helical membrane-spanning segments follow: residues 9 to 29 (YNVF…IVVA), 42 to 62 (FLFL…FFDV), 86 to 106 (SGVF…ALLV), and 126 to 146 (YPLL…SIGL). Composition is skewed to basic and acidic residues over residues 164–174 (GEPTAADKTDS) and 182–191 (DQTKSKKDGD). The interval 164–203 (GEPTAADKTDSRPVVVDLDQTKSKKDGDNPPQASGDMTSL) is disordered. Positions 194-203 (PQASGDMTSL) are enriched in polar residues.

It localises to the cell membrane. This is an uncharacterized protein from Mycoplasma pneumoniae (strain ATCC 29342 / M129 / Subtype 1) (Mycoplasmoides pneumoniae).